Consider the following 471-residue polypeptide: UDP-N-acetylmuramate--L-alanine ligase (471 aa).

112–118 (GTHGKTT) lines the ATP pocket.

The protein belongs to the MurCDEF family.

The protein localises to the cytoplasm. It carries out the reaction UDP-N-acetyl-alpha-D-muramate + L-alanine + ATP = UDP-N-acetyl-alpha-D-muramoyl-L-alanine + ADP + phosphate + H(+). The protein operates within cell wall biogenesis; peptidoglycan biosynthesis. Functionally, cell wall formation. The chain is UDP-N-acetylmuramate--L-alanine ligase from Aromatoleum aromaticum (strain DSM 19018 / LMG 30748 / EbN1) (Azoarcus sp. (strain EbN1)).